Reading from the N-terminus, the 188-residue chain is dCTP deaminase (188 aa).

DCTP contacts are provided by residues 111–116, 135–137, glutamine 156, tyrosine 170, and glutamine 180; these read KSTYAR and TLE. The active-site Proton donor/acceptor is glutamate 137.

The protein belongs to the dCTP deaminase family. In terms of assembly, homotrimer.

The enzyme catalyses dCTP + H2O + H(+) = dUTP + NH4(+). The protein operates within pyrimidine metabolism; dUMP biosynthesis; dUMP from dCTP (dUTP route): step 1/2. Catalyzes the deamination of dCTP to dUTP. This is dCTP deaminase from Nitrosococcus oceani (strain ATCC 19707 / BCRC 17464 / JCM 30415 / NCIMB 11848 / C-107).